Reading from the N-terminus, the 199-residue chain is MLTETEGRVAVKLARKTIETLLLGGRVPGPRDAGTDLPPVFGENRGVFVTLTEKGMLRGCIGHPYPDSTLEQAIIDSAISAAVRDPRFPPVGGEELESLIVEVTILTQPEKINAPPKELPDKVEIGKHGLIVKQGYCQGLLLPQVAPENEMDSIDFLGHTCMKAGLSPDAWAKGAEVYCFEGQIFKEKEPEGEVIEEKF.

Residues 5–196 enclose the AMMECR1 domain; it reads TEGRVAVKLA…EKEPEGEVIE (192 aa).

The chain is Protein MA_3591 from Methanosarcina acetivorans (strain ATCC 35395 / DSM 2834 / JCM 12185 / C2A).